The following is a 576-amino-acid chain: Arginine--tRNA ligase (576 aa).

The 'HIGH' region signature appears at 132 to 142; it reads ANPTGPMHIGH.

It belongs to the class-I aminoacyl-tRNA synthetase family. Monomer.

It is found in the cytoplasm. It carries out the reaction tRNA(Arg) + L-arginine + ATP = L-arginyl-tRNA(Arg) + AMP + diphosphate. The sequence is that of Arginine--tRNA ligase from Ehrlichia chaffeensis (strain ATCC CRL-10679 / Arkansas).